A 324-amino-acid chain; its full sequence is Putative 12-oxophytodienoate reductase-like protein 1 (324 aa).

Met1 is subject to N-acetylmethionine. FMN contacts are provided by residues 14–16, Ala47, and Gln89; that span reads PMA. Residues 99–113 are compositionally biased toward polar residues; it reads QDCQPNGESPVSSTD. The disordered stretch occupies residues 99–128; the sequence is QDCQPNGESPVSSTDKPFADDPSNEFTPPR. 160–163 serves as a coordination point for substrate; the sequence is HGAH. Catalysis depends on Tyr165, which acts as the Proton donor. FMN is bound at residue Arg212. Residue Arg252 participates in substrate binding. Residues Gly282 and 303–304 each bind FMN; that span reads GR.

It belongs to the NADH:flavin oxidoreductase/NADH oxidase family. It depends on FMN as a cofactor.

Its function is as follows. Putative oxophytodienoate reductase that may be involved in the biosynthesis or metabolism of oxylipin signaling molecules. The protein is Putative 12-oxophytodienoate reductase-like protein 1 of Arabidopsis thaliana (Mouse-ear cress).